A 234-amino-acid chain; its full sequence is Large ribosomal subunit protein uL1 (234 aa).

The protein belongs to the universal ribosomal protein uL1 family. Part of the 50S ribosomal subunit.

Functionally, binds directly to 23S rRNA. The L1 stalk is quite mobile in the ribosome, and is involved in E site tRNA release. In terms of biological role, protein L1 is also a translational repressor protein, it controls the translation of the L11 operon by binding to its mRNA. The sequence is that of Large ribosomal subunit protein uL1 from Helicobacter pylori (strain G27).